The chain runs to 452 residues: Tripartite motif-containing protein 49C (452 aa).

The RING-type zinc finger occupies 15–56 (CPLCMNYFIDPVTIDCGHSFCRPCFYLNWQDIPFLVQCSECT). Residues 88 to 129 (SEEQMCGTHRETKKIFCEVDRSLLCLLCSSSQEHRYHRHRPI) form a B box-type zinc finger. Positions 93, 96, 115, and 121 each coordinate Zn(2+). Positions 269–452 (ELSAGPITGL…LRPIFCCIHF (184 aa)) constitute a B30.2/SPRY domain.

The chain is Tripartite motif-containing protein 49C (TRIM49C) from Homo sapiens (Human).